The primary structure comprises 339 residues: Uroporphyrinogen decarboxylase (339 aa).

Substrate is bound by residues 23–27 (RQAGR), Asp72, Tyr147, Thr202, and His315.

Belongs to the uroporphyrinogen decarboxylase family. As to quaternary structure, homodimer.

The protein localises to the cytoplasm. It catalyses the reaction uroporphyrinogen III + 4 H(+) = coproporphyrinogen III + 4 CO2. The protein operates within porphyrin-containing compound metabolism; protoporphyrin-IX biosynthesis; coproporphyrinogen-III from 5-aminolevulinate: step 4/4. Catalyzes the decarboxylation of four acetate groups of uroporphyrinogen-III to yield coproporphyrinogen-III. This is Uroporphyrinogen decarboxylase from Citrifermentans bemidjiense (strain ATCC BAA-1014 / DSM 16622 / JCM 12645 / Bem) (Geobacter bemidjiensis).